Reading from the N-terminus, the 187-residue chain is KS71A fimbrillin (187 aa).

The first 21 residues, 1–21 (MIKSVIAGAVAMAVVSFGANA), serve as a signal peptide directing secretion. C43 and C82 are oxidised to a cystine.

Belongs to the fimbrial protein family.

Its subcellular location is the fimbrium. Its function is as follows. Fimbriae (also called pili), polar filaments radiating from the surface of the bacterium to a length of 0.5-1.5 micrometers and numbering 100-300 per cell, enable bacteria to colonize the epithelium of specific host organs. The chain is KS71A fimbrillin (KS71A) from Escherichia coli.